A 326-amino-acid polypeptide reads, in one-letter code: MENVFDYEDIQLIPAKCIVNSRSECDTSVRLGGHTFKLPVVPANMQTIIDEKLAISLAENGYFYVMHRFEPETRIDFIKDMNARGLFSSISVGVKDEEYEFVRQLAEENLTPEYVTIDIAHGHSNAVIEMIQHLKKHLPDSFVIAGNVGTPEAVRELENAGADATKVGIGPGKVCITKIKTGFGTGGWQLAALRWCAKAASKPIIADGGIRTHGDIAKSIRFGATMVMIGSLFAGHEESPGQTIEKDGKLYKEYFGSASEFQKGEKKNVEGKKMHVAHKGSIKDTLIEMEQDLQSSISYAGGTKLNAIRNVDYVIVKNSIFNGDKY.

The Thioimidate intermediate role is filled by Cys175. NADP(+) is bound at residue 204 to 227; sequence IIADGGIRTHGDIAKSIRFGATMV.

The protein belongs to the IMPDH/GMPR family. GuaC type 2 subfamily.

The enzyme catalyses IMP + NH4(+) + NADP(+) = GMP + NADPH + 2 H(+). In terms of biological role, catalyzes the irreversible NADPH-dependent deamination of GMP to IMP. It functions in the conversion of nucleobase, nucleoside and nucleotide derivatives of G to A nucleotides, and in maintaining the intracellular balance of A and G nucleotides. The polypeptide is GMP reductase (guaC) (Bacillus subtilis (strain 168)).